The primary structure comprises 1013 residues: Sodium/potassium-transporting ATPase subunit alpha-3 (1013 aa).

Positions 1 to 24 are disordered; the sequence is MGDKKDDKDSPKKNKGKERRDLDD. Residues 1-77 are Cytoplasmic-facing; it reads MGDKKDDKDS…NALTPPPTTP (77 aa). A phosphoserine mark is found at Ser-37 and Ser-56. The segment at 72 to 74 is interaction with phosphoinositide-3 kinase; that stretch reads PPP. Residues 78-98 form a helical membrane-spanning segment; that stretch reads EWVKFCRQLFGGFSILLWIGA. The Extracellular portion of the chain corresponds to 99-121; that stretch reads ILCFLAYGIQAGTEDDPSGDNLY. A helical membrane pass occupies residues 122-142; that stretch reads LGIVLAAVVIITGCFSYYQEA. The Cytoplasmic segment spans residues 143–278; the sequence is KSSKIMESFK…VGKTPIAIEI (136 aa). Phosphoserine is present on residues Ser-218 and Ser-265. Residues 279 to 298 form a helical membrane-spanning segment; the sequence is EHFIQLITGVAVFLGVSFFI. Residues 299–310 are Extracellular-facing; sequence LSLILGYTWLEA. A helical membrane pass occupies residues 311–328; the sequence is VIFLIGIIVANVPEGLLA. Topologically, residues 329–762 are cytoplasmic; that stretch reads TVTVCLTLTA…EEGRLIFDNL (434 aa). The 4-aspartylphosphate intermediate role is filled by Asp-366. Ser-442 bears the Phosphoserine mark. Tyr-548 is subject to Phosphotyrosine. Mg(2+) contacts are provided by Asp-707 and Asp-711. Residues 763 to 782 form a helical membrane-spanning segment; it reads KKSIAYTLTSNIPEITPFLL. The Extracellular portion of the chain corresponds to 783–792; sequence FIMANIPLPL. The helical transmembrane segment at 793–813 threads the bilayer; that stretch reads GTITILCIDLGTDMVPAISLA. The Cytoplasmic portion of the chain corresponds to 814–833; that stretch reads YEAAESDIMKRQPRNPRTDK. A helical membrane pass occupies residues 834 to 856; it reads LVNERLISMAYGQIGMIQALGGF. Topologically, residues 857 to 908 are extracellular; the sequence is FSYFVILAENGFLPGNLVGIRLNWDDRTVNDLEDSYGQQWTYEQRKVVEFTC. The helical transmembrane segment at 909–928 threads the bilayer; it reads HTAFFVSIVVVQWADLIICK. Topologically, residues 929–941 are cytoplasmic; that stretch reads TRRNSVFQQGMKN. Phosphoserine; by PKA is present on Ser-933. A helical membrane pass occupies residues 942-960; the sequence is KILIFGLFEETALAAFLSY. Over 961 to 975 the chain is Extracellular; sequence CPGMDVALRMYPLKP. Residues 976 to 996 traverse the membrane as a helical segment; the sequence is SWWFCAFPYSFLIFVYDEIRK. At 997-1013 the chain is on the cytoplasmic side; the sequence is LILRRNPGGWVEKETYY.

It belongs to the cation transport ATPase (P-type) (TC 3.A.3) family. Type IIC subfamily. The sodium/potassium-transporting ATPase is composed of a catalytic alpha subunit, an auxiliary non-catalytic beta subunit and an additional regulatory subunit. Interacts with regulatory subunit FXYD1.

The protein resides in the cell membrane. It catalyses the reaction K(+)(out) + Na(+)(in) + ATP + H2O = K(+)(in) + Na(+)(out) + ADP + phosphate + H(+). In terms of biological role, this is the catalytic component of the active enzyme, which catalyzes the hydrolysis of ATP coupled with the exchange of sodium and potassium ions across the plasma membrane. This action creates the electrochemical gradient of sodium and potassium ions, providing the energy for active transport of various nutrients. This Homo sapiens (Human) protein is Sodium/potassium-transporting ATPase subunit alpha-3 (ATP1A3).